The sequence spans 156 residues: PopC secretion inhibitor (156 aa).

Residues 1-89 are disordered; it reads MNPGSAPWER…PVRSRAEVHQ (89 aa). Over residues 8-28 the composition is skewed to basic and acidic residues; that stretch reads WERRTRERMRAMSRKNGEWGD.

Interacts with PopC in non-starving cells.

It localises to the cytoplasm. In response to starvation, RelA is activated resulting in the accumulation of (p)ppGpp, which causes the degradation of PopD in an FtsH(D)-dependent manner, thereby releasing pre-formed PopC for secretion. In terms of biological role, inhibitor of protease PopC. In non-starving cells, forms a cytoplasmic complex with PopC and inhibits PopC secretion and activity. This is PopC secretion inhibitor from Myxococcus xanthus (strain DK1622).